The chain runs to 489 residues: N-succinylglutamate 5-semialdehyde dehydrogenase 1 (489 aa).

223–228 (GSSRTG) contacts NAD(+). Residues Glu-246 and Cys-280 contribute to the active site.

It belongs to the aldehyde dehydrogenase family. AstD subfamily.

The enzyme catalyses N-succinyl-L-glutamate 5-semialdehyde + NAD(+) + H2O = N-succinyl-L-glutamate + NADH + 2 H(+). The protein operates within amino-acid degradation; L-arginine degradation via AST pathway; L-glutamate and succinate from L-arginine: step 4/5. Functionally, catalyzes the NAD-dependent reduction of succinylglutamate semialdehyde into succinylglutamate. The protein is N-succinylglutamate 5-semialdehyde dehydrogenase 1 of Pseudoalteromonas translucida (strain TAC 125).